The following is a 202-amino-acid chain: Nucleoside triphosphate pyrophosphatase (202 aa).

Asp79 (proton acceptor) is an active-site residue.

This sequence belongs to the Maf family. The cofactor is a divalent metal cation.

Its subcellular location is the cytoplasm. The catalysed reaction is a ribonucleoside 5'-triphosphate + H2O = a ribonucleoside 5'-phosphate + diphosphate + H(+). It carries out the reaction a 2'-deoxyribonucleoside 5'-triphosphate + H2O = a 2'-deoxyribonucleoside 5'-phosphate + diphosphate + H(+). Functionally, nucleoside triphosphate pyrophosphatase. May have a dual role in cell division arrest and in preventing the incorporation of modified nucleotides into cellular nucleic acids. This chain is Nucleoside triphosphate pyrophosphatase, found in Rhodopseudomonas palustris (strain HaA2).